The chain runs to 279 residues: MSALEWYAHKSLGDGIFWIQERFYESGNRANIWLVRGSEQDVVIDTGLGLRSLPEYLYSSGLLRDRAARDNAACRPLLAVATHVHFDHSGGLYQFDRVAVHHAEAEALARGDNFETVTWLSDSEVVRAPSPGWRARQFRVQAVQPTLVLQDGDVINLGDRQLTVMHMPGHSRGSICLHDKDRKILFSGDVVYDGSLIDWLPYSRISDYVGTCERLIELVDRGLVEKVLPGHFNTFGAERLFRLASNYISKAGICHKVSTFAMRSLASLALRVTNSRTSP.

S2 bears the N-acetylserine mark. H83, H85, D87, H88, H170, D189, and H231 together coordinate Zn(2+). C254 carries the S-palmitoyl cysteine lipid modification.

It belongs to the metallo-beta-lactamase superfamily. Glyoxalase II family. Requires Zn(2+) as cofactor. Palmitoylated on Cys-254 by ZDHHC20.

It is found in the endoplasmic reticulum membrane. The protein localises to the cell membrane. The catalysed reaction is hexadecanoyl-CoA + H2O = hexadecanoate + CoA + H(+). It carries out the reaction dodecanoyl-CoA + H2O = dodecanoate + CoA + H(+). The enzyme catalyses tetradecanoyl-CoA + H2O = tetradecanoate + CoA + H(+). It catalyses the reaction octadecanoyl-CoA + H2O = octadecanoate + CoA + H(+). The catalysed reaction is a beta-lactam + H2O = a substituted beta-amino acid. Its function is as follows. Acyl-CoA thioesterases are a group of enzymes that catalyze the hydrolysis of acyl-CoAs to the free fatty acid and coenzyme A (CoASH), providing the potential to regulate intracellular levels of acyl-CoAs, free fatty acids and CoASH. Has an acyl-CoA thioesterase activity towards the long chain fatty acyl-CoA thioester palmitoyl-CoA (hexadecanoyl-CoA; C16:0-CoA). Displays a substrate preference for fatty acyl-CoAs with chain-lengths C12-C18. The sequence is that of Acyl-coenzyme A thioesterase MBLAC2 (MBLAC2) from Bos taurus (Bovine).